The following is a 1146-amino-acid chain: Error-prone DNA polymerase (1146 aa).

Disordered stretches follow at residues 1–43 and 154–178; these read MGWG…WSRK and ATPE…PPGP. A compositionally biased stretch (basic and acidic residues) spans 12-26; it reads ELERVLSGRPGRTDP.

The protein belongs to the DNA polymerase type-C family. DnaE2 subfamily.

It is found in the cytoplasm. It catalyses the reaction DNA(n) + a 2'-deoxyribonucleoside 5'-triphosphate = DNA(n+1) + diphosphate. In terms of biological role, DNA polymerase involved in damage-induced mutagenesis and translesion synthesis (TLS). It is not the major replicative DNA polymerase. This is Error-prone DNA polymerase from Nocardia farcinica (strain IFM 10152).